Here is a 92-residue protein sequence, read N- to C-terminus: Small ribosomal subunit protein bS18 (92 aa).

This sequence belongs to the bacterial ribosomal protein bS18 family. In terms of assembly, part of the 30S ribosomal subunit. Forms a tight heterodimer with protein bS6.

Its function is as follows. Binds as a heterodimer with protein bS6 to the central domain of the 16S rRNA, where it helps stabilize the platform of the 30S subunit. The protein is Small ribosomal subunit protein bS18 of Pelagibacter ubique (strain HTCC1062).